Here is a 107-residue protein sequence, read N- to C-terminus: Nucleoid-associated protein AZOSEA06390 (107 aa).

This sequence belongs to the YbaB/EbfC family. In terms of assembly, homodimer.

It is found in the cytoplasm. It localises to the nucleoid. Binds to DNA and alters its conformation. May be involved in regulation of gene expression, nucleoid organization and DNA protection. This chain is Nucleoid-associated protein AZOSEA06390, found in Aromatoleum aromaticum (strain DSM 19018 / LMG 30748 / EbN1) (Azoarcus sp. (strain EbN1)).